A 137-amino-acid polypeptide reads, in one-letter code: Nucleoside diphosphate kinase (137 aa).

Residues K9, F57, R85, T91, R102, and N112 each coordinate ATP. H115 serves as the catalytic Pros-phosphohistidine intermediate.

Belongs to the NDK family. As to quaternary structure, homotetramer. Mg(2+) is required as a cofactor.

It is found in the cytoplasm. It carries out the reaction a 2'-deoxyribonucleoside 5'-diphosphate + ATP = a 2'-deoxyribonucleoside 5'-triphosphate + ADP. The enzyme catalyses a ribonucleoside 5'-diphosphate + ATP = a ribonucleoside 5'-triphosphate + ADP. In terms of biological role, major role in the synthesis of nucleoside triphosphates other than ATP. The ATP gamma phosphate is transferred to the NDP beta phosphate via a ping-pong mechanism, using a phosphorylated active-site intermediate. In Campylobacter hominis (strain ATCC BAA-381 / DSM 21671 / CCUG 45161 / LMG 19568 / NCTC 13146 / CH001A), this protein is Nucleoside diphosphate kinase.